The primary structure comprises 283 residues: Zip homologous protein 4 (283 aa).

An RING-type zinc finger spans residues 6 to 50 (CFRCYKFPSKQIEFYLTNCMHMFCIECERLCHPPEEEPLKCIQCS). Disordered stretches follow at residues 149–175 (KKQL…SSRS) and 201–283 (TKAQ…RNSQ). Over residues 163 to 175 (PRSNSLKVASSRS) the composition is skewed to polar residues. A compositionally biased stretch (low complexity) spans 202-216 (KAQAKAEAEAEAPAK). Polar residues predominate over residues 220-235 (SKAQTTKCTSNYQSHP). The segment covering 267–283 (KKHEAQREKHKEHRNSQ) has biased composition (basic and acidic residues).

As to quaternary structure, interacts with zhp-3; the interaction is required for their localization along paired chromosomes and stability, and for the formation of chiasma during meiotic recombination. In terms of tissue distribution, expressed in the germline.

The protein localises to the chromosome. Functionally, recruited co-dependently with zhp-3 to the synaptonemal complex between homologous chromosome pairs to regulate the formation and number of crossover events between homologs during meiotic recombination. In the early stages of pachytene, in complex with zhp-4, recruited by the zhp-1-zhp-2 heterodimer to designated crossover sites along the recombination intermediate to stabilize other pro-crossover factors such as rmh-1, msh-5 and cosa-1. This in turn facilitates crossover and promotes the formation of chiasma in each meiotic nucleus at the late pachytene stage of meiosis. Negatively regulates double strand break formation to promote formation of the crossover intermediate. In Caenorhabditis elegans, this protein is Zip homologous protein 4.